A 159-amino-acid chain; its full sequence is Cyclin-dependent kinase inhibitor 1 (159 aa).

Ser2 carries the N-acetylserine modification. Ser2 is covalently cross-linked (Glycyl serine ester (Ser-Gly) (interchain with G-Cter in ubiquitin)). A C4-type zinc finger spans residues His12–Cys40. The required for binding cyclins stretch occupies residues Cys17–Val24. Residues Val53–Leu58 are required for binding CDKs. Ser78 carries the post-translational modification Phosphoserine; by NUAK1. A disordered region spans residues Ser78–Glu106. The span at Arg82–Pro93 shows a compositional bias: basic and acidic residues. Phosphoserine; by GSK3-beta is present on Ser112. The disordered stretch occupies residues Val118–Leu142. Ser125 is modified (phosphoserine). Positions Arg135 to Pro159 match the PIP-box K+4 motif motif. The residue at position 140 (Thr140) is a Phosphothreonine; by PKA, PKB/AKT1, PIM1 and PIM2. Ser141 is modified (phosphoserine; by NUAK1). The tract at residues His147–Pro159 is interaction with TRIM39.

It belongs to the CDI family. In terms of assembly, interacts with HDAC1; the interaction is prevented by competitive binding of C10orf90/FATS to HDAC1 facilitating acetylation and protein stabilization of CDKN1A/p21. Interacts with MKRN1. Interacts with PSMA3. Interacts with PCNA. Component of the ternary complex, cyclin D-CDK4-CDKN1A. Interacts (via its N-terminal domain) with CDK4; the interaction promotes the assembly of the cyclin D-CDK4 complex, its nuclear translocation and promotes the cyclin D-dependent enzyme activity of CDK4. Binding to CDK2 leads to CDK2/cyclin E inactivation at the G1-S phase DNA damage checkpoint, thereby arresting cells at the G1-S transition during DNA repair. Interacts with PIM1. Interacts with STK11. Interacts with NUAK1. Interacts with DTL and TRIM39. Interacts with PKP3; the interaction sequesters CDKN1A to the cytoplasm thereby repressing its role as an inhibitor of CDK4- and CDK6-driven RB1 phosphorylation. In terms of processing, phosphorylation of Thr-140 or Ser-141 impairs binding to PCNA. Phosphorylation at Ser-112 by GSK3-beta enhances ubiquitination by the DCX(DTL) complex. Phosphorylation of Thr-140 by PIM2 enhances its stability and inhibits cell proliferation. Phosphorylation of Thr-140 by PIM1 results in the relocation of CDKN1A to the cytoplasm and enhanced CDKN1A protein stability. UV radiation-induced phosphorylation at Ser-78 and Ser-141 by NUAK1 leads to its degradation. Post-translationally, ubiquitinated by MKRN1; leading to polyubiquitination and 26S proteasome-dependent degradation. Ubiquitinated by the DCX(DTL) complex, also named CRL4(CDT2) complex, leading to its degradation during S phase or following UV irradiation. Ubiquitination by the DCX(DTL) complex is essential to control replication licensing and is PCNA-dependent: interacts with PCNA via its PIP-box, while the presence of the containing the 'K+4' motif in the PIP box, recruit the DCX(DTL) complex, leading to its degradation. Ubiquitination at Ser-2 leads to degradation by the proteasome pathway. Ubiquitinated by RNF114; leading to proteasomal degradation. Acetylation leads to protein stability. Acetylated in vitro on Lys-136, Lys-149, Lys-156 and Lys-158. Deacetylation by HDAC1 is prevented by competitive binding of C10orf90/FATS to HDAC1. As to expression, expressed in keratinocytes (at protein level).

The protein resides in the cytoplasm. Its subcellular location is the nucleus. May be involved in p53/TP53 mediated inhibition of cellular proliferation in response to DNA damage. Binds to and inhibits cyclin-dependent kinase activity, preventing phosphorylation of critical cyclin-dependent kinase substrates and blocking cell cycle progression. Functions in the nuclear localization and assembly of cyclin D-CDK4 complex and promotes its kinase activity towards RB1. At higher stoichiometric ratios, inhibits the kinase activity of the cyclin D-CDK4 complex. Inhibits DNA synthesis by DNA polymerase delta by competing with POLD3 for PCNA binding. Plays an important role in controlling cell cycle progression and DNA damage-induced G2 arrest. Its function is as follows. Plays an important role in controlling cell cycle progression and DNA damage-induced G2 arrest. Involved in p53/TP53 mediated inhibition of cellular proliferation in response to DNA damage. Also involved in p53-independent DNA damage-induced G2 arrest mediated by CREB3L1 in astrocytes and osteoblasts. Binds to and inhibits cyclin-dependent kinase activity, preventing phosphorylation of critical cyclin-dependent kinase substrates and blocking cell cycle progression. Functions in the nuclear localization and assembly of cyclin D-CDK4 complex and promotes its kinase activity towards RB1. At higher stoichiometric ratios, inhibits the kinase activity of the cyclin D-CDK4 complex. Inhibits DNA synthesis by DNA polymerase delta by competing with POLD3 for PCNA binding. Negatively regulates the CDK4- and CDK6-driven phosphorylation of RB1 in keratinocytes, thereby resulting in the release of E2F1 and subsequent transcription of E2F1-driven G1/S phase promoting genes. The protein is Cyclin-dependent kinase inhibitor 1 (Cdkn1a) of Mus musculus (Mouse).